The chain runs to 54 residues: Large ribosomal subunit protein bL32 (54 aa).

A disordered region spans residues 1-26; that stretch reads MAVQKNKPTRSKRGMRRSHDSLTAPH. Residues 7 to 16 are compositionally biased toward basic residues; sequence KPTRSKRGMR.

The protein belongs to the bacterial ribosomal protein bL32 family.

This Buchnera aphidicola subsp. Acyrthosiphon pisum (strain 5A) protein is Large ribosomal subunit protein bL32.